Reading from the N-terminus, the 203-residue chain is Outer-membrane lipoprotein LolB (203 aa).

The first 18 residues, 1 to 18 (MTLRSFLIFFLSSLILAG), serve as a signal peptide directing secretion. Residue Cys-19 is the site of N-palmitoyl cysteine attachment. Residue Cys-19 is the site of S-diacylglycerol cysteine attachment.

The protein belongs to the LolB family. Monomer.

Its subcellular location is the cell outer membrane. Functionally, plays a critical role in the incorporation of lipoproteins in the outer membrane after they are released by the LolA protein. This chain is Outer-membrane lipoprotein LolB, found in Vibrio parahaemolyticus serotype O3:K6 (strain RIMD 2210633).